The chain runs to 467 residues: Replication factor C large subunit (467 aa).

Residue 47–54 coordinates ATP; the sequence is GPPGVGKT.

The protein belongs to the activator 1 small subunits family. RfcL subfamily. Heteromultimer composed of small subunits (RfcS) and large subunits (RfcL).

In terms of biological role, part of the RFC clamp loader complex which loads the PCNA sliding clamp onto DNA. In Methanothrix thermoacetophila (strain DSM 6194 / JCM 14653 / NBRC 101360 / PT) (Methanosaeta thermophila), this protein is Replication factor C large subunit.